The following is a 460-amino-acid chain: A-type ATP synthase subunit B (460 aa).

This sequence belongs to the ATPase alpha/beta chains family. As to quaternary structure, has multiple subunits, A(3), B(3), C, D, E, F, G, I and K(x); there may be a few other subunits as well.

The protein resides in the cell membrane. Functionally, component of the A-type ATP synthase that produces ATP from ADP in the presence of a proton gradient across the membrane. The B chain is a regulatory subunit. This Methanosarcina mazei (strain ATCC BAA-159 / DSM 3647 / Goe1 / Go1 / JCM 11833 / OCM 88) (Methanosarcina frisia) protein is A-type ATP synthase subunit B.